Here is a 389-residue protein sequence, read N- to C-terminus: MIDPTARAWAYLSRVAEPPCAQLAALVRCVGPVEAADRVRRGQVGNELAQHTGARREIDRAADDLELLMRRGGRLITPDDDEWPVLAFAAFSGAGARARPCGHSPLVLWALGPARLDEVAPRAAAVVGTRAATAYGEHVAADLAAGLAERDVAVVSGGAYGIDGAAHRAALDSEGITVAVLAGGFDIPYPAGHSALLHRIAQHGVLFTEYPPGVRPARHRFLTRNRLVAAVARAAVVVEAGLRSGAANTAAWARALGRVVAAVPGPVTSSASAGCHTLLRHGAELVTRADDIVEFVGHIGELAGDEPRPGAALDVLSEAERQVYEALPGRGAATIDEIAVGSGLLPAQVLGPLAILEVAGLAECRDGRWRILRAGAGQAAAKGAAARLV.

This sequence belongs to the DprA/Smf family.

In terms of biological role, may help load RecA onto ssDNA. This Mycobacterium tuberculosis (strain CDC 1551 / Oshkosh) protein is Putative DNA processing protein DprA.